The sequence spans 189 residues: Protein GrpE (189 aa).

Over residues 1 to 13 (MSENKQPEQNQDL) the composition is skewed to polar residues. Residues 1 to 35 (MSENKQPEQNQDLTGEPSPEELEAAQAADEFDAMN) are disordered.

This sequence belongs to the GrpE family. Homodimer.

It localises to the cytoplasm. Its function is as follows. Participates actively in the response to hyperosmotic and heat shock by preventing the aggregation of stress-denatured proteins, in association with DnaK and GrpE. It is the nucleotide exchange factor for DnaK and may function as a thermosensor. Unfolded proteins bind initially to DnaJ; upon interaction with the DnaJ-bound protein, DnaK hydrolyzes its bound ATP, resulting in the formation of a stable complex. GrpE releases ADP from DnaK; ATP binding to DnaK triggers the release of the substrate protein, thus completing the reaction cycle. Several rounds of ATP-dependent interactions between DnaJ, DnaK and GrpE are required for fully efficient folding. The polypeptide is Protein GrpE (Polaromonas naphthalenivorans (strain CJ2)).